The chain runs to 143 residues: Large ribosomal subunit protein uL15 (143 aa).

Belongs to the universal ribosomal protein uL15 family. Part of the 50S ribosomal subunit.

In terms of biological role, binds to the 23S rRNA. This chain is Large ribosomal subunit protein uL15, found in Methanococcus aeolicus (strain ATCC BAA-1280 / DSM 17508 / OCM 812 / Nankai-3).